Consider the following 460-residue polypeptide: GTPase Der (460 aa).

2 consecutive EngA-type G domains span residues 3-167 (FTIA…PEPT) and 189-364 (IRVA…AIWN). GTP contacts are provided by residues 9-16 (GRPNVGKS), 56-60 (DTAGL), 119-122 (NKSE), 195-202 (GRPNAGKS), 242-246 (DTAGL), and 307-310 (NKWD). The KH-like domain occupies 365-449 (RRVPTAALNR…PIRITLREKA (85 aa)).

It belongs to the TRAFAC class TrmE-Era-EngA-EngB-Septin-like GTPase superfamily. EngA (Der) GTPase family. As to quaternary structure, associates with the 50S ribosomal subunit.

In terms of biological role, GTPase that plays an essential role in the late steps of ribosome biogenesis. The sequence is that of GTPase Der from Nitrobacter hamburgensis (strain DSM 10229 / NCIMB 13809 / X14).